Here is an 879-residue protein sequence, read N- to C-terminus: Phosphoinositide 3-kinase regulatory subunit 5 (879 aa).

Positions 23-100 (SGSTDISSNW…APYIPETSDL (78 aa)) are heterodimerization. Disordered regions lie at residues 314–345 (SLED…PKQD) and 570–590 (SSST…PSPS). Residues 315-336 (LEDDVTEEDEEVDFEEVDDKDE) show a composition bias toward acidic residues. Residues 570–589 (SSSTNAPMTNAESPLKSPSP) show a composition bias toward polar residues. The interval 651–751 (PILADMVLYY…WSNGEKVCTS (101 aa)) is interaction with beta-gamma G protein dimers.

In terms of assembly, heterodimer. Interacts with a catalytic subunit and with beta-gamma G protein dimers.

It localises to the nucleus. It is found in the cytoplasm. Its subcellular location is the cell membrane. Its activity is regulated as follows. Greatly activated by G gamma proteins. Its function is as follows. Regulatory subunit of the PI3K gamma complex. Required for recruitment of the catalytic subunit to the plasma membrane via interaction with beta-gamma G protein dimers. Required for G protein-mediated activation of PIK3CG. This chain is Phosphoinositide 3-kinase regulatory subunit 5 (pik3r5), found in Xenopus laevis (African clawed frog).